The primary structure comprises 298 residues: UDP-N-acetylenolpyruvoylglucosamine reductase (298 aa).

Positions 27 to 191 (TGGEADVFVM…LDATFSLALE (165 aa)) constitute an FAD-binding PCMH-type domain. Arg-170 is an active-site residue. Ser-220 functions as the Proton donor in the catalytic mechanism. Glu-290 is a catalytic residue.

This sequence belongs to the MurB family. FAD is required as a cofactor.

The protein resides in the cytoplasm. It catalyses the reaction UDP-N-acetyl-alpha-D-muramate + NADP(+) = UDP-N-acetyl-3-O-(1-carboxyvinyl)-alpha-D-glucosamine + NADPH + H(+). Its pathway is cell wall biogenesis; peptidoglycan biosynthesis. In terms of biological role, cell wall formation. This Listeria monocytogenes serotype 4a (strain HCC23) protein is UDP-N-acetylenolpyruvoylglucosamine reductase.